A 128-amino-acid chain; its full sequence is KHDC1-like protein (128 aa).

Belongs to the KHDC1 family.

This Homo sapiens (Human) protein is KHDC1-like protein (KHDC1L).